The sequence spans 428 residues: Gamma-glutamyl phosphate reductase (428 aa).

It belongs to the gamma-glutamyl phosphate reductase family.

Its subcellular location is the cytoplasm. It carries out the reaction L-glutamate 5-semialdehyde + phosphate + NADP(+) = L-glutamyl 5-phosphate + NADPH + H(+). The protein operates within amino-acid biosynthesis; L-proline biosynthesis; L-glutamate 5-semialdehyde from L-glutamate: step 2/2. Functionally, catalyzes the NADPH-dependent reduction of L-glutamate 5-phosphate into L-glutamate 5-semialdehyde and phosphate. The product spontaneously undergoes cyclization to form 1-pyrroline-5-carboxylate. The polypeptide is Gamma-glutamyl phosphate reductase (Afipia carboxidovorans (strain ATCC 49405 / DSM 1227 / KCTC 32145 / OM5) (Oligotropha carboxidovorans)).